The primary structure comprises 426 residues: Enolase (426 aa).

Gln163 is a binding site for (2R)-2-phosphoglycerate. Residue Glu205 is the Proton donor of the active site. The Mg(2+) site is built by Asp242, Glu285, and Asp312. (2R)-2-phosphoglycerate is bound by residues Lys337, Arg366, Ser367, and Lys388. Residue Lys337 is the Proton acceptor of the active site.

The protein belongs to the enolase family. Mg(2+) serves as cofactor.

The protein localises to the cytoplasm. Its subcellular location is the secreted. It localises to the cell surface. It catalyses the reaction (2R)-2-phosphoglycerate = phosphoenolpyruvate + H2O. It functions in the pathway carbohydrate degradation; glycolysis; pyruvate from D-glyceraldehyde 3-phosphate: step 4/5. Its function is as follows. Catalyzes the reversible conversion of 2-phosphoglycerate (2-PG) into phosphoenolpyruvate (PEP). It is essential for the degradation of carbohydrates via glycolysis. This chain is Enolase, found in Gluconacetobacter diazotrophicus (strain ATCC 49037 / DSM 5601 / CCUG 37298 / CIP 103539 / LMG 7603 / PAl5).